The following is a 792-amino-acid chain: Kinesin-associated protein 3 (792 aa).

Phosphoserine is present on Ser-60. Positions 103–119 (LSGKEKKEKSSKPKDPP) are enriched in basic and acidic residues. The disordered stretch occupies residues 103 to 124 (LSGKEKKEKSSKPKDPPPFEGM). ARM repeat units follow at residues 333–373 (FMEN…NLSF), 374–412 (DTGL…HISM), 494–533 (DGPT…NLTI), 578–620 (DDSC…QMVF), and 621–662 (HQAT…IIAE).

As to quaternary structure, heterotrimer of KIFAP3, KIF3A and KIF3B. Interacts with RAP1GDS1/SMG GDS. Interacts with SMC3 subunit of the cohesin complex. Post-translationally, phosphorylated on tyrosine residues by SRC in vitro; this reduces the binding affinity of the protein for RAP1GDS1.

Its function is as follows. Involved in tethering the chromosomes to the spindle pole and in chromosome movement. Binds to the tail domain of the KIF3A/KIF3B heterodimer to form a heterotrimeric KIF3 complex and may regulate the membrane binding of this complex. The polypeptide is Kinesin-associated protein 3 (KIFAP3) (Homo sapiens (Human)).